A 526-amino-acid polypeptide reads, in one-letter code: MSVIKRALISLSDKAGAVEFAQNLHKLGVEILSTGGTAKLLAGAGVPVIEVADYTGFPEMLDGRVKTLHPKIHGGILGRRDLDEHVAKMEEHGIGNIDLVCVNLYPFAATIAKPGCTLEDAIENIDIGGPTMVRSAAKNWKHVAIVTDTADFPAIAAELEANNGALSDKTRFNLSRKAFSHTAQYDGMISNYLTSLSDGVLSGEPEIGEFPSRFNQSWIKVQDMRYGENPHQRAAFYRDIDPAAGSLSAYNQLQGKELSYNNIADADAAWEAVKSFDAPACVIVKHANPCGVAVAADTLTAYKLAYATDTTSAFGGIIAFNREVDGETVKQITDNQFMEVLMAPKFTAEALEIAAAKKNVRVLEVPLKAGANRFELKRVGGGLLVQTPDINRINRADLKVVSKRQPTEQEWNDLLFVWNVAKYVKSNAIVFGKGGQTYGIGAGQMSRVDSTRIAARKAQDAGLDLNGACAASDAFFPFRDGVDVIAEQGIKAIIHPAGSMRDQEVFDAADEHGIAMAVTGIRHFRH.

The region spanning methionine 1–threonine 147 is the MGS-like domain.

Belongs to the PurH family.

It catalyses the reaction (6R)-10-formyltetrahydrofolate + 5-amino-1-(5-phospho-beta-D-ribosyl)imidazole-4-carboxamide = 5-formamido-1-(5-phospho-D-ribosyl)imidazole-4-carboxamide + (6S)-5,6,7,8-tetrahydrofolate. It carries out the reaction IMP + H2O = 5-formamido-1-(5-phospho-D-ribosyl)imidazole-4-carboxamide. The protein operates within purine metabolism; IMP biosynthesis via de novo pathway; 5-formamido-1-(5-phospho-D-ribosyl)imidazole-4-carboxamide from 5-amino-1-(5-phospho-D-ribosyl)imidazole-4-carboxamide (10-formyl THF route): step 1/1. It participates in purine metabolism; IMP biosynthesis via de novo pathway; IMP from 5-formamido-1-(5-phospho-D-ribosyl)imidazole-4-carboxamide: step 1/1. The sequence is that of Bifunctional purine biosynthesis protein PurH from Neisseria gonorrhoeae (strain ATCC 700825 / FA 1090).